Here is a 226-residue protein sequence, read N- to C-terminus: Putative mitochondrial outer membrane protein porin 5 (226 aa).

It belongs to the eukaryotic mitochondrial porin (TC 1.B.8.1) family.

The protein resides in the mitochondrion outer membrane. In terms of biological role, putative channel that allows diffusion of small hydrophilic molecules through membranes. The chain is Putative mitochondrial outer membrane protein porin 5 (VDAC5) from Arabidopsis thaliana (Mouse-ear cress).